We begin with the raw amino-acid sequence, 71 residues long: Translation initiation factor IF-1 (71 aa).

An S1-like domain is found at Met-1 to Tyr-71.

Belongs to the IF-1 family. In terms of assembly, component of the 30S ribosomal translation pre-initiation complex which assembles on the 30S ribosome in the order IF-2 and IF-3, IF-1 and N-formylmethionyl-tRNA(fMet); mRNA recruitment can occur at any time during PIC assembly.

The protein localises to the cytoplasm. Its function is as follows. One of the essential components for the initiation of protein synthesis. Stabilizes the binding of IF-2 and IF-3 on the 30S subunit to which N-formylmethionyl-tRNA(fMet) subsequently binds. Helps modulate mRNA selection, yielding the 30S pre-initiation complex (PIC). Upon addition of the 50S ribosomal subunit IF-1, IF-2 and IF-3 are released leaving the mature 70S translation initiation complex. This Flavobacterium psychrophilum (strain ATCC 49511 / DSM 21280 / CIP 103535 / JIP02/86) protein is Translation initiation factor IF-1.